A 378-amino-acid chain; its full sequence is Ribosomal RNA large subunit methyltransferase G (378 aa).

It belongs to the methyltransferase superfamily. RlmG family.

The protein localises to the cytoplasm. The catalysed reaction is guanosine(1835) in 23S rRNA + S-adenosyl-L-methionine = N(2)-methylguanosine(1835) in 23S rRNA + S-adenosyl-L-homocysteine + H(+). Specifically methylates the guanine in position 1835 (m2G1835) of 23S rRNA. This is Ribosomal RNA large subunit methyltransferase G from Enterobacter sp. (strain 638).